Consider the following 21-residue polypeptide: TKIADLRSQTVDQLSDXLXKL.

Belongs to the universal ribosomal protein uL29 family.

In Brevundimonas diminuta (Pseudomonas diminuta), this protein is Large ribosomal subunit protein uL29 (rpmC).